We begin with the raw amino-acid sequence, 718 residues long: D-(-)-3-hydroxybutyrate oligomer hydrolase (718 aa).

Residue Ser-320 is the Charge relay system of the active site.

Belongs to the D-(-)-3-hydroxybutyrate oligomer hydrolase family.

The protein localises to the cytoplasm. It carries out the reaction (3R)-hydroxybutanoate dimer + H2O = 2 (R)-3-hydroxybutanoate + H(+). It participates in lipid metabolism; butanoate metabolism. Inhibited by diisopropylfluorophosphate (DFP). Functionally, participates in the degradation of poly-3-hydroxybutyrate (PHB). It works downstream of poly(3-hydroxybutyrate) depolymerase, hydrolyzing D(-)-3-hydroxybutyrate oligomers of various length (3HB-oligomers) into 3HB-monomers. Seems to have also poly(3-hydroxybutyrate) depolymerase activity since it is able to release 3HB-monomers from artificial amorphous PHB. The polypeptide is D-(-)-3-hydroxybutyrate oligomer hydrolase (phaZ2) (Cupriavidus necator (strain ATCC 17699 / DSM 428 / KCTC 22496 / NCIMB 10442 / H16 / Stanier 337) (Ralstonia eutropha)).